The following is a 127-amino-acid chain: Large-conductance mechanosensitive channel (127 aa).

3 helical membrane-spanning segments follow: residues 8 to 28 (FAFKGNVLDLAIGVIIGAAFG), 30 to 50 (IVTALVDVVIMPIISIILSLI), and 70 to 90 (IGVLIKTIIEFLIIAFVLFLF).

The protein belongs to the MscL family. In terms of assembly, homopentamer.

It is found in the cell membrane. Functionally, channel that opens in response to stretch forces in the membrane lipid bilayer. May participate in the regulation of osmotic pressure changes within the cell. The protein is Large-conductance mechanosensitive channel of Herpetosiphon aurantiacus (strain ATCC 23779 / DSM 785 / 114-95).